We begin with the raw amino-acid sequence, 283 residues long: DegV domain-containing protein lin2658 (283 aa).

The DegV domain occupies 5–282; it reads IAVVTDSTTY…EGALGLTWSI (278 aa). 2 residues coordinate hexadecanoate: Ser-63 and Ser-96.

In terms of biological role, may bind long-chain fatty acids, such as palmitate, and may play a role in lipid transport or fatty acid metabolism. In Listeria innocua serovar 6a (strain ATCC BAA-680 / CLIP 11262), this protein is DegV domain-containing protein lin2658.